Consider the following 281-residue polypeptide: Bis(5'-nucleosyl)-tetraphosphatase, symmetrical (281 aa).

It belongs to the Ap4A hydrolase family.

The enzyme catalyses P(1),P(4)-bis(5'-adenosyl) tetraphosphate + H2O = 2 ADP + 2 H(+). In terms of biological role, hydrolyzes diadenosine 5',5'''-P1,P4-tetraphosphate to yield ADP. The chain is Bis(5'-nucleosyl)-tetraphosphatase, symmetrical from Pectobacterium atrosepticum (strain SCRI 1043 / ATCC BAA-672) (Erwinia carotovora subsp. atroseptica).